The sequence spans 493 residues: Glutamyl-tRNA(Gln) amidotransferase subunit A (493 aa).

Active-site charge relay system residues include Lys79 and Ser159. The active-site Acyl-ester intermediate is the Ser183.

It belongs to the amidase family. GatA subfamily. As to quaternary structure, heterotrimer of A, B and C subunits.

The enzyme catalyses L-glutamyl-tRNA(Gln) + L-glutamine + ATP + H2O = L-glutaminyl-tRNA(Gln) + L-glutamate + ADP + phosphate + H(+). Functionally, allows the formation of correctly charged Gln-tRNA(Gln) through the transamidation of misacylated Glu-tRNA(Gln) in organisms which lack glutaminyl-tRNA synthetase. The reaction takes place in the presence of glutamine and ATP through an activated gamma-phospho-Glu-tRNA(Gln). The chain is Glutamyl-tRNA(Gln) amidotransferase subunit A from Rhizobium meliloti (strain 1021) (Ensifer meliloti).